The primary structure comprises 673 residues: Protein kinase ORF74 (673 aa).

A Protein kinase domain is found at 128-404 (TDTDEAVARG…ARELLVYPRY (277 aa)). The active-site Proton acceptor is the D252. Residues 340–364 (MDNDALDSRRTGRDGDPVNPEGFGT) are disordered. Residues 345 to 355 (LDSRRTGRDGD) are compositionally biased toward basic and acidic residues.

It belongs to the protein kinase superfamily. Ser/Thr protein kinase family.

It catalyses the reaction L-seryl-[protein] + ATP = O-phospho-L-seryl-[protein] + ADP + H(+). It carries out the reaction L-threonyl-[protein] + ATP = O-phospho-L-threonyl-[protein] + ADP + H(+). This is Protein kinase ORF74 (ORF74) from Ictalurid herpesvirus 1 (strain Auburn) (IcHV-1).